The primary structure comprises 1061 residues: Calcium-transporting ATPase 4, endoplasmic reticulum-type (1061 aa).

Residues 1-21 (MGKGGEDCGNKQTNSSELVKS) are disordered. Topologically, residues 1 to 70 (MGKGGEDCGN…NELEKPEGTS (70 aa)) are cytoplasmic. The helical transmembrane segment at 71–91 (IFKLILEQFNDTLVRILLAAA) threads the bilayer. Over 92–115 (VISFVLAFFDGDEGGEMGITAFVE) the chain is Lumenal. A helical transmembrane segment spans residues 116–135 (PLVIFLILIVNAIVGIWQET). Residues 136-278 (NAEKALEALK…EEDTPLKKKL (143 aa)) lie on the Cytoplasmic side of the membrane. The chain crosses the membrane as a helical span at residues 279-298 (NEFGEVLTMIIGLICALVWL). The Lumenal segment spans residues 299 to 327 (INVKYFLSWEYVDGWPRNFKFSFEKCTYY). A helical transmembrane segment spans residues 328 to 345 (FEIAVALAVAAIPEGLPA). 4 residues coordinate Ca(2+): Val-336, Ala-337, Ile-339, and Glu-341. Topologically, residues 346-786 (VITTCLALGT…GEGRSIYNNM (441 aa)) are cytoplasmic. Catalysis depends on Asp-383, which acts as the 4-aspartylphosphate intermediate. The Mg(2+) site is built by Asp-731 and Asp-735. A helical membrane pass occupies residues 787–806 (KAFIRYMISSNIGEVASIFL). 2 residues coordinate Ca(2+): Asn-797 and Glu-800. At 807 to 816 (TAALGIPEGM) the chain is on the lumenal side. Residues 817–837 (IPVQLLWVNLVTDGPPATALG) traverse the membrane as a helical segment. The Ca(2+) site is built by Asn-825, Thr-828, and Asp-829. The Cytoplasmic segment spans residues 838 to 857 (FNPPDKDIMKKPPRRSDDSL). A helical membrane pass occupies residues 858 to 880 (ITAWILFRYMVIGLYVGVATVGV). Residues 881–950 (FIIWYTHNSF…YFQQGKIKAS (70 aa)) are Lumenal-facing. Residues 951-970 (TLSLSVLVAIEMFNSLNALS) form a helical membrane-spanning segment. Residue Glu-961 participates in Ca(2+) binding. Residues 971–983 (EDGSLVTMPPWVN) are Cytoplasmic-facing. Residues 984–1002 (PWLLLAMAVSFGLHFVILY) form a helical membrane-spanning segment. Residues 1003 to 1017 (VPFLAQVFGIVPLSL) are Lumenal-facing. A helical membrane pass occupies residues 1018–1038 (NEWLLVLAVSLPVILIDEVLK). Residues 1039–1061 (FVGRCTSGYRYSPRTPSAKQKEE) are Cytoplasmic-facing.

It belongs to the cation transport ATPase (P-type) (TC 3.A.3) family. Type IIA subfamily.

The protein resides in the membrane. It carries out the reaction Ca(2+)(in) + ATP + H2O = Ca(2+)(out) + ADP + phosphate + H(+). Its function is as follows. This magnesium-dependent enzyme catalyzes the hydrolysis of ATP coupled with the translocation of calcium from the cytosol to an endomembrane compartment. In Arabidopsis thaliana (Mouse-ear cress), this protein is Calcium-transporting ATPase 4, endoplasmic reticulum-type (ECA4).